The sequence spans 156 residues: Small ribosomal subunit protein uS7 (156 aa).

Belongs to the universal ribosomal protein uS7 family. Part of the 30S ribosomal subunit. Contacts proteins S9 and S11.

In terms of biological role, one of the primary rRNA binding proteins, it binds directly to 16S rRNA where it nucleates assembly of the head domain of the 30S subunit. Is located at the subunit interface close to the decoding center, probably blocks exit of the E-site tRNA. The polypeptide is Small ribosomal subunit protein uS7 (Clostridium novyi (strain NT)).